A 646-amino-acid polypeptide reads, in one-letter code: MGNIKELQTSLANKIAAGEVVERPGSVVKELLENALDAKATEINIEIKQSGIESIRVVDNGTGIEEDDLKLVFHRHATSKLHEDSDLFHIRTLGFRGEALASISSVAKVTLRTCTDGQSGHEIYAEDGAILEQKPAKAKKGTDILVESLFYNTPARLKYVKSLYTELGKITDIVNRMAMSHPNVRFTLTSDDKVLIKTNGSGRTNEVMAEIYGMKVAKDLVHITGDTSDYHLEGYVAKPEHSRSNRHYISIFINGRYIKNFVLNKAIVEGYHTLLTIGRYPICYINIEMDPILVDVNVHPTKLEVRLSKEEQLYQLIVQKIQEAFKDKILIPHNDENKLYKKNKVLDVFEQQKLDFENRTASNPPAEKPDEETDRVNENSDTQAFQTNEQTSENGSDASYQAGQRAVLQDLEGNTKNSEGLFDSEATSNEAASAEIESSEDDVRETEHAKPHRRVPYMEVVGQVHGTYIIAQNETGMFMIDQHAAQERIKYEYFRDKIGEVTNEVQNLLIPMTFHFSKDEQMIINQYKDELDKVGVHLEPFGSHDYIVNSYPVWFPKEEAQEIIQDMVEYVLEHRKVDIKKIREEAAIMMSCKKSIKANHYLRNHEMADLIDQLREMEDPFTCPHGRPIIISFSNYELERLFKRIM.

Disordered regions lie at residues 356–380 (FENR…NENS) and 415–452 (TKNS…AKPH). Residues 424–436 (SEATSNEAASAEI) show a composition bias toward low complexity.

It belongs to the DNA mismatch repair MutL/HexB family.

This protein is involved in the repair of mismatches in DNA. It is required for dam-dependent methyl-directed DNA mismatch repair. May act as a 'molecular matchmaker', a protein that promotes the formation of a stable complex between two or more DNA-binding proteins in an ATP-dependent manner without itself being part of a final effector complex. The protein is DNA mismatch repair protein MutL of Staphylococcus carnosus (strain TM300).